The chain runs to 316 residues: Ferrochelatase (316 aa).

2 residues coordinate Fe cation: His190 and Glu271.

It belongs to the ferrochelatase family.

Its subcellular location is the cytoplasm. It catalyses the reaction heme b + 2 H(+) = protoporphyrin IX + Fe(2+). The protein operates within porphyrin-containing compound metabolism; protoheme biosynthesis; protoheme from protoporphyrin-IX: step 1/1. Its function is as follows. Catalyzes the ferrous insertion into protoporphyrin IX. The chain is Ferrochelatase from Sulfurimonas denitrificans (strain ATCC 33889 / DSM 1251) (Thiomicrospira denitrificans (strain ATCC 33889 / DSM 1251)).